A 274-amino-acid polypeptide reads, in one-letter code: Dermonecrotic toxin SdSicTox-betaIIB1bxii (274 aa).

The active site involves H5. The Mg(2+) site is built by E25 and D27. H41 acts as the Nucleophile in catalysis. Cystine bridges form between C45-C51 and C47-C190. Mg(2+) is bound at residue D85.

Belongs to the arthropod phospholipase D family. Class II subfamily. It depends on Mg(2+) as a cofactor. As to expression, expressed by the venom gland.

It localises to the secreted. It carries out the reaction an N-(acyl)-sphingosylphosphocholine = an N-(acyl)-sphingosyl-1,3-cyclic phosphate + choline. It catalyses the reaction an N-(acyl)-sphingosylphosphoethanolamine = an N-(acyl)-sphingosyl-1,3-cyclic phosphate + ethanolamine. The enzyme catalyses a 1-acyl-sn-glycero-3-phosphocholine = a 1-acyl-sn-glycero-2,3-cyclic phosphate + choline. The catalysed reaction is a 1-acyl-sn-glycero-3-phosphoethanolamine = a 1-acyl-sn-glycero-2,3-cyclic phosphate + ethanolamine. Dermonecrotic toxins cleave the phosphodiester linkage between the phosphate and headgroup of certain phospholipids (sphingolipid and lysolipid substrates), forming an alcohol (often choline) and a cyclic phosphate. This toxin acts on sphingomyelin (SM). It may also act on ceramide phosphoethanolamine (CPE), lysophosphatidylcholine (LPC) and lysophosphatidylethanolamine (LPE), but not on lysophosphatidylserine (LPS), and lysophosphatidylglycerol (LPG). It acts by transphosphatidylation, releasing exclusively cyclic phosphate products as second products. Induces dermonecrosis, hemolysis, increased vascular permeability, edema, inflammatory response, and platelet aggregation. This is Dermonecrotic toxin SdSicTox-betaIIB1bxii from Sicarius cf. damarensis (strain GJB-2008) (Six-eyed sand spider).